We begin with the raw amino-acid sequence, 245 residues long: Spore membrane assembly protein 1 (245 aa).

Involved in spore and ascus formation. Required for the efficient assembly of the precursors of the prospore membrane to a continuous prospore membrane. The protein is Spore membrane assembly protein 1 (SMA1) of Saccharomyces cerevisiae (strain ATCC 204508 / S288c) (Baker's yeast).